The sequence spans 154 residues: Small heat shock protein IbpB (154 aa).

One can recognise a sHSP domain in the interval 26 to 137 (GQEPQGFPPY…QPQRIAIGSA (112 aa)).

It belongs to the small heat shock protein (HSP20) family. As to quaternary structure, homodimer. Forms homomultimers of about 100-150 subunits at optimal growth temperatures. Conformation changes to oligomers at high temperatures or high ionic concentrations. The decrease in size of the multimers is accompanied by an increase in chaperone activity.

Its subcellular location is the cytoplasm. Associates with aggregated proteins, together with IbpA, to stabilize and protect them from irreversible denaturation and extensive proteolysis during heat shock and oxidative stress. Aggregated proteins bound to the IbpAB complex are more efficiently refolded and reactivated by the ATP-dependent chaperone systems ClpB and DnaK/DnaJ/GrpE. Its activity is ATP-independent. The chain is Small heat shock protein IbpB from Yersinia pseudotuberculosis serotype O:1b (strain IP 31758).